Reading from the N-terminus, the 179-residue chain is Large ribosomal subunit protein uL5 (179 aa).

It belongs to the universal ribosomal protein uL5 family. Part of the 50S ribosomal subunit; part of the 5S rRNA/L5/L18/L25 subcomplex. Contacts the 5S rRNA and the P site tRNA. Forms a bridge to the 30S subunit in the 70S ribosome.

Its function is as follows. This is one of the proteins that bind and probably mediate the attachment of the 5S RNA into the large ribosomal subunit, where it forms part of the central protuberance. In the 70S ribosome it contacts protein S13 of the 30S subunit (bridge B1b), connecting the 2 subunits; this bridge is implicated in subunit movement. Contacts the P site tRNA; the 5S rRNA and some of its associated proteins might help stabilize positioning of ribosome-bound tRNAs. The polypeptide is Large ribosomal subunit protein uL5 (Shewanella piezotolerans (strain WP3 / JCM 13877)).